Consider the following 599-residue polypeptide: Elongation factor 4 (599 aa).

Positions 5-187 constitute a tr-type G domain; that stretch reads SHIRNFSIIA…RLVQSIPAPE (183 aa). Residues 17 to 22 and 134 to 137 contribute to the GTP site; these read DHGKST and NKMD.

It belongs to the TRAFAC class translation factor GTPase superfamily. Classic translation factor GTPase family. LepA subfamily.

It is found in the cell inner membrane. The enzyme catalyses GTP + H2O = GDP + phosphate + H(+). Functionally, required for accurate and efficient protein synthesis under certain stress conditions. May act as a fidelity factor of the translation reaction, by catalyzing a one-codon backward translocation of tRNAs on improperly translocated ribosomes. Back-translocation proceeds from a post-translocation (POST) complex to a pre-translocation (PRE) complex, thus giving elongation factor G a second chance to translocate the tRNAs correctly. Binds to ribosomes in a GTP-dependent manner. This Pseudomonas entomophila (strain L48) protein is Elongation factor 4.